The sequence spans 142 residues: Small ribosomal subunit protein uS9 (142 aa).

The disordered stretch occupies residues 117–142 (KGDPRRTEHKKPGIKHARSKRQKAYR). Residues 123-142 (TEHKKPGIKHARSKRQKAYR) show a composition bias toward basic residues.

It belongs to the universal ribosomal protein uS9 family.

This is Small ribosomal subunit protein uS9 from Pyrobaculum aerophilum (strain ATCC 51768 / DSM 7523 / JCM 9630 / CIP 104966 / NBRC 100827 / IM2).